The sequence spans 320 residues: Thymidylate synthase (320 aa).

DUMP is bound by residues R27 and 182-183; that span reads RR. The active-site Nucleophile is C202. Residues 222–225, N233, and 263–265 contribute to the dUMP site; these read RSAD and HIY. D225 lines the (6R)-5,10-methylene-5,6,7,8-tetrahydrofolate pocket. A319 lines the (6R)-5,10-methylene-5,6,7,8-tetrahydrofolate pocket.

The protein belongs to the thymidylate synthase family. Bacterial-type ThyA subfamily. In terms of assembly, homodimer.

It is found in the cytoplasm. It carries out the reaction dUMP + (6R)-5,10-methylene-5,6,7,8-tetrahydrofolate = 7,8-dihydrofolate + dTMP. Its pathway is pyrimidine metabolism; dTTP biosynthesis. Catalyzes the reductive methylation of 2'-deoxyuridine-5'-monophosphate (dUMP) to 2'-deoxythymidine-5'-monophosphate (dTMP) while utilizing 5,10-methylenetetrahydrofolate (mTHF) as the methyl donor and reductant in the reaction, yielding dihydrofolate (DHF) as a by-product. This enzymatic reaction provides an intracellular de novo source of dTMP, an essential precursor for DNA biosynthesis. The polypeptide is Thymidylate synthase (Limosilactobacillus reuteri (strain DSM 20016) (Lactobacillus reuteri)).